Here is a 647-residue protein sequence, read N- to C-terminus: Probable squalene--hopene cyclase (647 aa).

One copy of the PFTB 1 repeat lies at Glu67–Gly108. The Proton donor role is filled by Asp388. PFTB repeat units follow at residues Ile413–Leu454 and Ile530–Gly577.

This sequence belongs to the terpene cyclase/mutase family.

The catalysed reaction is squalene = hop-22(29)-ene. It carries out the reaction squalene + H2O = hopan-22-ol. The protein operates within secondary metabolite biosynthesis; hopanoid biosynthesis. Catalyzes the cyclization of squalene into hopene. Probably part of an operon y4aABCD involved in the synthesis of an isoprenoid compound. The chain is Probable squalene--hopene cyclase (shc) from Sinorhizobium fredii (strain NBRC 101917 / NGR234).